Here is a 366-residue protein sequence, read N- to C-terminus: GTP cyclohydrolase 1 type 2 homolog (366 aa).

Positions 64, 65, 102, 326, and 329 each coordinate Zn(2+).

This sequence belongs to the GTP cyclohydrolase I type 2/NIF3 family. In terms of assembly, homohexamer.

The chain is GTP cyclohydrolase 1 type 2 homolog from Staphylococcus aureus (strain MSSA476).